A 206-amino-acid polypeptide reads, in one-letter code: Ectodysplasin-A receptor-associated adapter protein (206 aa).

Disordered regions lie at residues 1 to 36 (MRPL…DKYP) and 52 to 77 (TLNC…TGDP). Polar residues-rich tracts occupy residues 24–33 (PSTLSFNTSD) and 52–62 (TLNCPPNSDMK). The Death domain maps to 114-190 (DVIRIKLDPC…DVEKVLRRWV (77 aa)).

Self-associates and binds to EDAR, TRAF1, TRAF2 and TRAF3.

Its subcellular location is the cytoplasm. Its function is as follows. Adapter protein that interacts with EDAR DEATH domain and couples the receptor to EDA signaling pathway during morphogenesis of ectodermal organs. Mediates the activation of NF-kappa-B. In Macaca fascicularis (Crab-eating macaque), this protein is Ectodysplasin-A receptor-associated adapter protein (EDARADD).